We begin with the raw amino-acid sequence, 495 residues long: Cobyric acid synthase (495 aa).

Positions 262 to 445 (CLEIAVIRLP…LHGLFDNHRW (184 aa)) constitute a GATase cobBQ-type domain. The active-site Nucleophile is the Cys-340. His-437 is an active-site residue.

The protein belongs to the CobB/CobQ family. CobQ subfamily.

Its pathway is cofactor biosynthesis; adenosylcobalamin biosynthesis. Its function is as follows. Catalyzes amidations at positions B, D, E, and G on adenosylcobyrinic A,C-diamide. NH(2) groups are provided by glutamine, and one molecule of ATP is hydrogenolyzed for each amidation. This is Cobyric acid synthase from Synechococcus sp. (strain JA-3-3Ab) (Cyanobacteria bacterium Yellowstone A-Prime).